The sequence spans 219 residues: Small ribosomal subunit protein uS3c (219 aa).

One can recognise a KH type-2 domain in the interval 47 to 119 (VRKYVRTAEN…KFIISLAEVE (73 aa)).

This sequence belongs to the universal ribosomal protein uS3 family. As to quaternary structure, part of the 30S ribosomal subunit.

It is found in the plastid. The protein localises to the chloroplast. The chain is Small ribosomal subunit protein uS3c (rps3) from Staurastrum punctulatum (Green alga).